Reading from the N-terminus, the 317-residue chain is Acetyl-coenzyme A carboxylase carboxyl transferase subunit alpha (317 aa).

A CoA carboxyltransferase C-terminal domain is found at 40–294 (RLQHKSQELT…KQQILADLAE (255 aa)).

Belongs to the AccA family. Acetyl-CoA carboxylase is a heterohexamer composed of biotin carboxyl carrier protein (AccB), biotin carboxylase (AccC) and two subunits each of ACCase subunit alpha (AccA) and ACCase subunit beta (AccD).

The protein localises to the cytoplasm. The enzyme catalyses N(6)-carboxybiotinyl-L-lysyl-[protein] + acetyl-CoA = N(6)-biotinyl-L-lysyl-[protein] + malonyl-CoA. It functions in the pathway lipid metabolism; malonyl-CoA biosynthesis; malonyl-CoA from acetyl-CoA: step 1/1. Functionally, component of the acetyl coenzyme A carboxylase (ACC) complex. First, biotin carboxylase catalyzes the carboxylation of biotin on its carrier protein (BCCP) and then the CO(2) group is transferred by the carboxyltransferase to acetyl-CoA to form malonyl-CoA. This chain is Acetyl-coenzyme A carboxylase carboxyl transferase subunit alpha, found in Haemophilus ducreyi (strain 35000HP / ATCC 700724).